We begin with the raw amino-acid sequence, 77 residues long: Metallothionein-like protein type 2 (77 aa).

This sequence belongs to the metallothionein superfamily. Type 15 family. In terms of tissue distribution, expressed in the left, stem and flower, at very low levels in roots and is not detectable in mesophyll protoplasts.

Its function is as follows. Metallothioneins have a high content of cysteine residues that bind various heavy metals. This chain is Metallothionein-like protein type 2 (MTI), found in Vicia faba (Broad bean).